Consider the following 429-residue polypeptide: Adenylosuccinate synthetase (429 aa).

GTP contacts are provided by residues 12–18 and 40–42; these read GDEGKGK and GHT. The active-site Proton acceptor is the Asp13. Mg(2+)-binding residues include Asp13 and Gly40. Residues 13–16, 38–41, Thr128, Arg142, Gln223, Thr238, and Arg302 each bind IMP; these read DEGK and NAGH. The active-site Proton donor is His41. 298 to 304 serves as a coordination point for substrate; sequence TTTGRPR. GTP contacts are provided by residues Arg304, 330–332, and 412–414; these read SID and SVG.

Belongs to the adenylosuccinate synthetase family. As to quaternary structure, homodimer. Mg(2+) serves as cofactor.

The protein resides in the cytoplasm. The enzyme catalyses IMP + L-aspartate + GTP = N(6)-(1,2-dicarboxyethyl)-AMP + GDP + phosphate + 2 H(+). Its pathway is purine metabolism; AMP biosynthesis via de novo pathway; AMP from IMP: step 1/2. Functionally, plays an important role in the de novo pathway of purine nucleotide biosynthesis. Catalyzes the first committed step in the biosynthesis of AMP from IMP. This Bacillus cytotoxicus (strain DSM 22905 / CIP 110041 / 391-98 / NVH 391-98) protein is Adenylosuccinate synthetase.